Here is a 370-residue protein sequence, read N- to C-terminus: MEPDRQADIAALDSTLTTVERVLDVDGLRARIEKLEHEASDPQLWDDQARAQRVTSELSHAQGELRRIEELRARLDDLPVLYELAAEEGEGAAEALAEADAELKALRADIEATEVRTLLSGEYDEREALVTIRSGAGGVDAADWAEMLMRMYIRWAEQHKYPVEVFDTSYAEEAGIKSATFAVHAPFAYGTLSVEQGTHRLVRISPFDNQSRRQTSFAEVEVLPVVETTDHIDIPEGDVRVDVYRSSGPGGQSVNTTDSAVRLTHIPTGIVVTCQNEKSQLQNKISAMRVLQAKLLERKRSEERAELDALKGEGGSSWGNQMRSYVLHPYQMVKDLRTEYEVGNPAAVLDGDIDGFLEAGIRWRNRKDDE.

Residue glutamine 252 is modified to N5-methylglutamine.

It belongs to the prokaryotic/mitochondrial release factor family. In terms of processing, methylated by PrmC. Methylation increases the termination efficiency of RF2.

It is found in the cytoplasm. In terms of biological role, peptide chain release factor 2 directs the termination of translation in response to the peptide chain termination codons UGA and UAA. The polypeptide is Peptide chain release factor 2 (Mycobacterium avium (strain 104)).